The chain runs to 471 residues: ATP synthase subunit beta (471 aa).

ATP is bound at residue 154-161 (GGAGVGKT).

It belongs to the ATPase alpha/beta chains family. In terms of assembly, F-type ATPases have 2 components, CF(1) - the catalytic core - and CF(0) - the membrane proton channel. CF(1) has five subunits: alpha(3), beta(3), gamma(1), delta(1), epsilon(1). CF(0) has three main subunits: a(1), b(2) and c(9-12). The alpha and beta chains form an alternating ring which encloses part of the gamma chain. CF(1) is attached to CF(0) by a central stalk formed by the gamma and epsilon chains, while a peripheral stalk is formed by the delta and b chains.

The protein resides in the cell membrane. The catalysed reaction is ATP + H2O + 4 H(+)(in) = ADP + phosphate + 5 H(+)(out). In terms of biological role, produces ATP from ADP in the presence of a proton gradient across the membrane. The catalytic sites are hosted primarily by the beta subunits. This Mesomycoplasma hyopneumoniae (strain 232) (Mycoplasma hyopneumoniae) protein is ATP synthase subunit beta.